The chain runs to 164 residues: MKTNRSLVVIVSLITATLLLTACAQPEQSSLAGDWLLTPKDKTRGLTGSIAVNIAPFRCKTNCRGDNLPDNTRRWQLSGGNEKELTYLHNMSAQEKVGLNPGWQCYTSFFMRVCQGKPGTRPIVNEDYVSESGFFGSMMHVGIIELRRCQSENCQQELKAINTH.

Positions 1-22 (MKTNRSLVVIVSLITATLLLTA) are cleaved as a signal peptide. Cys23 carries the N-palmitoyl cysteine lipid modification. The S-diacylglycerol cysteine moiety is linked to residue Cys23.

It localises to the cell membrane. This is an uncharacterized protein from Escherichia coli (strain K12).